The following is a 368-amino-acid chain: RNA polymerase sigma factor SigA (368 aa).

The interval 60–86 (VVDENGDPSEHSLKKDEKEAEKAQAED) is disordered. The span at 67–84 (PSEHSLKKDEKEAEKAQA) shows a compositional bias: basic and acidic residues. The interval 135 to 205 (LAEANLRLVV…TRAIADQART (71 aa)) is sigma-70 factor domain-2. Residues 159–162 (DLIQ) carry the Interaction with polymerase core subunit RpoC motif. Positions 214–290 (ETINKLIRIQ…DQDATSPAEH (77 aa)) are sigma-70 factor domain-3. The interval 303–356 (VLDTLTDREENVLRLRFGLDDGRTRTLEEVGKVFGVTRERIRQIEAKALRKLRH) is sigma-70 factor domain-4. The H-T-H motif DNA-binding region spans 329–348 (LEEVGKVFGVTRERIRQIEA).

It belongs to the sigma-70 factor family. RpoD/SigA subfamily. In terms of assembly, interacts transiently with the RNA polymerase catalytic core.

It is found in the cytoplasm. Its function is as follows. Sigma factors are initiation factors that promote the attachment of RNA polymerase to specific initiation sites and are then released. This sigma factor is the primary sigma factor during exponential growth. The protein is RNA polymerase sigma factor SigA of Enterococcus faecalis (strain ATCC 700802 / V583).